The chain runs to 558 residues: Dihydroxy-acid dehydratase (558 aa).

Cys54 provides a ligand contact to [2Fe-2S] cluster. Asp86 contributes to the Mg(2+) binding site. Cys127 serves as a coordination point for [2Fe-2S] cluster. 2 residues coordinate Mg(2+): Asp128 and Lys129. Lys129 bears the N6-carboxylysine mark. Cys199 serves as a coordination point for [2Fe-2S] cluster. Glu448 contacts Mg(2+). Ser474 acts as the Proton acceptor in catalysis.

This sequence belongs to the IlvD/Edd family. As to quaternary structure, homodimer. [2Fe-2S] cluster is required as a cofactor. Requires Mg(2+) as cofactor.

It catalyses the reaction (2R)-2,3-dihydroxy-3-methylbutanoate = 3-methyl-2-oxobutanoate + H2O. The catalysed reaction is (2R,3R)-2,3-dihydroxy-3-methylpentanoate = (S)-3-methyl-2-oxopentanoate + H2O. The protein operates within amino-acid biosynthesis; L-isoleucine biosynthesis; L-isoleucine from 2-oxobutanoate: step 3/4. Its pathway is amino-acid biosynthesis; L-valine biosynthesis; L-valine from pyruvate: step 3/4. Its function is as follows. Functions in the biosynthesis of branched-chain amino acids. Catalyzes the dehydration of (2R,3R)-2,3-dihydroxy-3-methylpentanoate (2,3-dihydroxy-3-methylvalerate) into 2-oxo-3-methylpentanoate (2-oxo-3-methylvalerate) and of (2R)-2,3-dihydroxy-3-methylbutanoate (2,3-dihydroxyisovalerate) into 2-oxo-3-methylbutanoate (2-oxoisovalerate), the penultimate precursor to L-isoleucine and L-valine, respectively. The chain is Dihydroxy-acid dehydratase from Acidothermus cellulolyticus (strain ATCC 43068 / DSM 8971 / 11B).